Here is a 175-residue protein sequence, read N- to C-terminus: RNA pyrophosphohydrolase (175 aa).

In terms of domain architecture, Nudix hydrolase spans 8 to 159 (PYRTCVGMML…KRPVYERVVK (152 aa)). Positions 47 to 68 (GGVDPGEDPWTAAKRELYEETS) match the Nudix box motif.

It belongs to the Nudix hydrolase family. RppH subfamily. The cofactor is a divalent metal cation.

In terms of biological role, accelerates the degradation of transcripts by removing pyrophosphate from the 5'-end of triphosphorylated RNA, leading to a more labile monophosphorylated state that can stimulate subsequent ribonuclease cleavage. This Rhodopseudomonas palustris (strain BisB18) protein is RNA pyrophosphohydrolase.